The chain runs to 696 residues: Catalase (696 aa).

Catalysis depends on residues His-64 and Asn-137. Residues 187 to 211 (SLAQGSQISSERGSPKAYSNTEPNK) form a disordered region. Positions 189-208 (AQGSQISSERGSPKAYSNTE) are enriched in polar residues. A heme-binding site is contributed by Tyr-353.

This sequence belongs to the catalase family. Requires heme as cofactor.

It catalyses the reaction 2 H2O2 = O2 + 2 H2O. Functionally, occurs in almost all aerobically respiring organisms and serves to protect cells from the toxic effects of hydrogen peroxide. The protein is Catalase of Penicillium janthinellum (Penicillium vitale).